The primary structure comprises 99 residues: UPF0122 protein UU142 (99 aa).

This sequence belongs to the UPF0122 family.

In terms of biological role, might take part in the signal recognition particle (SRP) pathway. This is inferred from the conservation of its genetic proximity to ftsY/ffh. May be a regulatory protein. In Ureaplasma parvum serovar 3 (strain ATCC 700970), this protein is UPF0122 protein UU142.